A 430-amino-acid polypeptide reads, in one-letter code: Trigger factor (430 aa).

Positions 157–242 (GDLVALETWS…AVEVSEPVLP (86 aa)) constitute a PPIase FKBP-type domain.

Belongs to the FKBP-type PPIase family. Tig subfamily.

The protein resides in the cytoplasm. It catalyses the reaction [protein]-peptidylproline (omega=180) = [protein]-peptidylproline (omega=0). In terms of biological role, involved in protein export. Acts as a chaperone by maintaining the newly synthesized protein in an open conformation. Functions as a peptidyl-prolyl cis-trans isomerase. The protein is Trigger factor of Xanthomonas campestris pv. campestris (strain ATCC 33913 / DSM 3586 / NCPPB 528 / LMG 568 / P 25).